Here is a 41-residue protein sequence, read N- to C-terminus: uncharacterized protein (41 aa).

This is an uncharacterized protein from Archaeoglobus fulgidus (strain ATCC 49558 / DSM 4304 / JCM 9628 / NBRC 100126 / VC-16).